Reading from the N-terminus, the 693-residue chain is eEF1A lysine and N-terminal methyltransferase (693 aa).

The protein belongs to the methyltransferase superfamily.

The enzyme catalyses L-lysyl-[protein] + S-adenosyl-L-methionine = N(6)-methyl-L-lysyl-[protein] + S-adenosyl-L-homocysteine + H(+). It catalyses the reaction N(6)-methyl-L-lysyl-[protein] + S-adenosyl-L-methionine = N(6),N(6)-dimethyl-L-lysyl-[protein] + S-adenosyl-L-homocysteine + H(+). It carries out the reaction N-terminal glycyl-L-lysyl-L-glutamyl-[protein] + 3 S-adenosyl-L-methionine = N-terminal N,N,N-trimethyl-glycyl-L-lysyl-L-glutamyl-[protein] + 3 S-adenosyl-L-homocysteine + 3 H(+). Its function is as follows. Dual methyltransferase that catalyzes methylation of elongation factor 1-alpha (eef1a1 and eef1a2) at two different positions, and is therefore involved in the regulation of mRNA translation. Via its C-terminus, methylates the N-terminus of eef1a1 and eef1a2. Via its N-terminus dimethylates lysine residues of eef1a1 and eef1a2. This is eEF1A lysine and N-terminal methyltransferase (mettl13) from Xenopus laevis (African clawed frog).